The sequence spans 661 residues: Junctophilin-1 (661 aa).

Topologically, residues 1 to 639 are cytoplasmic; sequence MTGGRFDFDD…EKEANSGPNS (639 aa). 5 MORN repeats span residues 14–36, 38–59, 60–82, 106–128, and 129–151; these read YCGG…KGQG, YSGS…SGNT, YQGY…KWMY, YEGT…DGGT, and YQGQ…PYGM. Residues serine 157, serine 216, and serine 220 each carry the phosphoserine modification. Positions 228-247 are disordered; it reads SKSSISSKRSSVRSDAAMSR. 2 MORN repeats span residues 281–303 and 304–326; these read YMGE…NGMK and YEGE…DGSK. Over residues 433–454 the composition is skewed to basic and acidic residues; it reads DAKENPEEKVPEKPPTPKESPH. A disordered region spans residues 433–631; the sequence is DAKENPEEKV…SNDSCPALEK (199 aa). Phosphothreonine is present on threonine 448. Serine 452 carries the post-translational modification Phosphoserine. The residue at position 461 (threonine 461) is a Phosphothreonine. Phosphoserine is present on residues serine 465, serine 469, and serine 475. The span at 599-613 shows a compositional bias: basic and acidic residues; the sequence is VAKESKAEPKAKKSE. The helical; Anchor for type IV membrane protein transmembrane segment at 640–660 threads the bilayer; sequence IMIVLVMLLNIGLAILFVHFL.

It belongs to the junctophilin family. In terms of tissue distribution, abundantly expressed in skeletal muscle. Very low levels in heart.

Its subcellular location is the cell membrane. The protein resides in the endoplasmic reticulum membrane. The protein localises to the sarcoplasmic reticulum membrane. Junctophilins contribute to the formation of junctional membrane complexes (JMCs) which link the plasma membrane with the endoplasmic or sarcoplasmic reticulum in excitable cells. Provides a structural foundation for functional cross-talk between the cell surface and intracellular calcium release channels. JPH1 contributes to the construction of the skeletal muscle triad by linking the t-tubule (transverse-tubule) and SR (sarcoplasmic reticulum) membranes. This Homo sapiens (Human) protein is Junctophilin-1 (JPH1).